A 150-amino-acid chain; its full sequence is Transcriptional repressor NrdR (150 aa).

Residues 3-34 (CPFCGQLDSKVVDSRPDKGGAAIRRRRECESC) fold into a zinc finger. The ATP-cone domain occupies 49–139 (PLVLKKDGRR…VYRSFKDVNE (91 aa)).

This sequence belongs to the NrdR family. Zn(2+) serves as cofactor.

Functionally, negatively regulates transcription of bacterial ribonucleotide reductase nrd genes and operons by binding to NrdR-boxes. This chain is Transcriptional repressor NrdR, found in Geobacter sulfurreducens (strain ATCC 51573 / DSM 12127 / PCA).